The following is a 183-amino-acid chain: Early E3 20.2 kDa glycoprotein (183 aa).

N-linked (GlcNAc...) asparagine; by host glycosylation is found at asparagine 30, asparagine 73, asparagine 117, asparagine 134, and asparagine 135.

The protein belongs to the adenoviridae E3_20 family.

This chain is Early E3 20.2 kDa glycoprotein, found in Homo sapiens (Human).